Here is a 726-residue protein sequence, read N- to C-terminus: MDAKTDDSAGKCPFTGGGRRGHRNRDWWPEQLDLDVLHRNSTLSDPMGEDFDYAEEFKSLDLNAVIQDLHALMTDSQDWWPADFGHYGGLMIRMAWHSAGTYRITDGRGGAGAGQQRFAPLNSWPDNANLDKARRMLWPIKQKYGRKISWADLMILAGNVALESMGFKTFGFAGGRKDVWEPEELFWGPEGTWLGDERYSGERQLSEPLAAVQMGLIYVNPEGPNGNPDPVAAAKDIRETFYRMAMNDEETVALIAGGHTFGKTHGAGDPSLIGPDPEGAAIEDQGLGWKSGHGTGFGADTITGGPEVTWSQTPTRWSNYFFENLFGYEWELTKSPAGAWQWKAKNAEATVPDAHDPSKKHVPTMLTTDLSLRFDPIYEKISRRFLENPDQFADAFARAWFKLTHRDMGPKVRYLGPLVPKETLIWQDPIPEVDHVLVDDQDIAGLKAKILASGLSVSELVSTAWASASTFRGSDKRGGANGARIRLAPQKDWEVNDPAQLAKVLQRLEAIQGEFNAAQAGGKKISLADLIVLGGCAAVEKAARDAGVDVKVPFTPGRMDASQEQTDIDSFRALEPRADGFRNYLSGRQFMMPEEALVDRAQLLRLTAPEMTVLLGGLRVLGANSGGSEHGVLTKQVGKLTNDFFVNLLTMNTQWQPIADGTYEGRDRKTNELKWRATRVDLIFGAHSQLRALAEVYACGDSQEKFVQDFVAAWTKVMNADRFDLA.

Residues 1–25 (MDAKTDDSAGKCPFTGGGRRGHRNR) are disordered. The tryptophyl-tyrosyl-methioninium (Trp-Tyr) (with M-244) cross-link spans 96 to 218 (WHSAGTYRIT…LAAVQMGLIY (123 aa)). His-97 functions as the Proton acceptor in the catalytic mechanism. Positions 218 to 244 (YVNPEGPNGNPDPVAAAKDIRETFYRM) form a cross-link, tryptophyl-tyrosyl-methioninium (Tyr-Met) (with W-96). His-259 provides a ligand contact to heme b.

The protein belongs to the peroxidase family. Peroxidase/catalase subfamily. As to quaternary structure, homodimer or homotetramer. It depends on heme b as a cofactor. In terms of processing, formation of the three residue Trp-Tyr-Met cross-link is important for the catalase, but not the peroxidase activity of the enzyme.

It carries out the reaction H2O2 + AH2 = A + 2 H2O. It catalyses the reaction 2 H2O2 = O2 + 2 H2O. Its function is as follows. Bifunctional enzyme with both catalase and broad-spectrum peroxidase activity. This chain is Catalase-peroxidase, found in Chelativorans sp. (strain BNC1).